A 334-amino-acid polypeptide reads, in one-letter code: Trans-1,2-dihydrobenzene-1,2-diol dehydrogenase (334 aa).

Belongs to the Gfo/Idh/MocA family. As to quaternary structure, homodimer. In terms of tissue distribution, kidney.

It carries out the reaction (1R,2R)-1,2-dihydrobenzene-1,2-diol + NADP(+) = catechol + NADPH + H(+). The enzyme catalyses D-xylose + NADP(+) = D-xylono-1,5-lactone + NADPH + H(+). The chain is Trans-1,2-dihydrobenzene-1,2-diol dehydrogenase (DHDH) from Macaca fascicularis (Crab-eating macaque).